The chain runs to 247 residues: tRNA pseudouridine synthase A (247 aa).

Asp-52 (nucleophile) is an active-site residue. Residue Tyr-111 coordinates substrate.

Belongs to the tRNA pseudouridine synthase TruA family. As to quaternary structure, homodimer.

The catalysed reaction is uridine(38/39/40) in tRNA = pseudouridine(38/39/40) in tRNA. Formation of pseudouridine at positions 38, 39 and 40 in the anticodon stem and loop of transfer RNAs. This Caulobacter vibrioides (strain ATCC 19089 / CIP 103742 / CB 15) (Caulobacter crescentus) protein is tRNA pseudouridine synthase A.